The primary structure comprises 129 residues: Small ribosomal subunit protein uS11 (129 aa).

The interval 107-129 (IEDVTPVPHDSIRGKGGRRGRRV) is disordered.

This sequence belongs to the universal ribosomal protein uS11 family. As to quaternary structure, part of the 30S ribosomal subunit.

In terms of biological role, located on the platform of the 30S subunit. This is Small ribosomal subunit protein uS11 from Methanoculleus marisnigri (strain ATCC 35101 / DSM 1498 / JR1).